Here is a 949-residue protein sequence, read N- to C-terminus: MAM domain-containing glycosylphosphatidylinositol anchor protein 2 (949 aa).

The first 25 residues, Met1 to Ala25, serve as a signal peptide directing secretion. 2 Ig-like domains span residues Pro27–Asp127 and Pro134–Ser232. Disulfide bonds link Cys62-Cys110 and Cys159-Cys216. N-linked (GlcNAc...) asparagine glycans are attached at residues Asn92, Asn213, and Asn237. Ig-like domains lie at Pro242 to Val328, Pro340 to Ser436, Pro442 to Gln533, and Pro540 to Thr627. 2 disulfide bridges follow: Cys264-Cys310 and Cys359-Cys417. N-linked (GlcNAc...) asparagine glycosylation is found at Asn434, Asn443, Asn504, Asn610, and Asn703. 2 disulfides stabilise this stretch: Cys465–Cys515 and Cys561–Cys611. In terms of domain architecture, Fibronectin type-III spans Asp638 to Glu738. One can recognise an MAM domain in the interval Phe739 to Lys914. Asp924 is lipidated: GPI-anchor amidated aspartate. A propeptide spans Gly925–Arg949 (removed in mature form).

In terms of assembly, interacts (through the Ig-like domains) with NLGN2. Expressed predominantly in neuronal tissue. Expressed in brain.

It localises to the cell membrane. In terms of biological role, may be involved in cell-cell interactions. The sequence is that of MAM domain-containing glycosylphosphatidylinositol anchor protein 2 (Mdga2) from Rattus norvegicus (Rat).